The primary structure comprises 193 residues: Adenine phosphoribosyltransferase (193 aa).

The protein belongs to the purine/pyrimidine phosphoribosyltransferase family. As to quaternary structure, homodimer.

The protein resides in the cytoplasm. The catalysed reaction is AMP + diphosphate = 5-phospho-alpha-D-ribose 1-diphosphate + adenine. The protein operates within purine metabolism; AMP biosynthesis via salvage pathway; AMP from adenine: step 1/1. In terms of biological role, catalyzes a salvage reaction resulting in the formation of AMP, that is energically less costly than de novo synthesis. The polypeptide is Adenine phosphoribosyltransferase (Bifidobacterium longum (strain NCC 2705)).